The primary structure comprises 548 residues: Uridine-cytidine kinase-like 1 (548 aa).

Residues 1-18 (MAAPPASMSAAPSPLQSA) show a composition bias toward low complexity. Residues 1-74 (MAAPPASMSA…CKSEPPLLRT (74 aa)) form a disordered region. S56 and S63 each carry phosphoserine. 105–112 (GGSASGKT) is an ATP binding site. Position 539 is a phosphoserine (S539).

The protein belongs to the uridine kinase family. In terms of assembly, interacts with RNF19B. Post-translationally, ubiquitinated by RNF19B; which induces proteasomal degradation.

It localises to the cytoplasm. It is found in the nucleus. The catalysed reaction is uridine + ATP = UMP + ADP + H(+). The enzyme catalyses cytidine + ATP = CMP + ADP + H(+). The protein operates within pyrimidine metabolism; UMP biosynthesis via salvage pathway; UMP from uridine: step 1/1. May contribute to UTP accumulation needed for blast transformation and proliferation. The protein is Uridine-cytidine kinase-like 1 (Uckl1) of Mus musculus (Mouse).